The primary structure comprises 375 residues: Ribosomal RNA large subunit methyltransferase G (375 aa).

It belongs to the methyltransferase superfamily. RlmG family.

Its subcellular location is the cytoplasm. It carries out the reaction guanosine(1835) in 23S rRNA + S-adenosyl-L-methionine = N(2)-methylguanosine(1835) in 23S rRNA + S-adenosyl-L-homocysteine + H(+). Its function is as follows. Specifically methylates the guanine in position 1835 (m2G1835) of 23S rRNA. This Stutzerimonas stutzeri (strain A1501) (Pseudomonas stutzeri) protein is Ribosomal RNA large subunit methyltransferase G.